The sequence spans 235 residues: Adapter protein MecA (235 aa).

Residues 113-135 show a composition bias toward basic and acidic residues; sequence LRQSDKGDIVKSKVSSSDHKDGS. The tract at residues 113-136 is disordered; that stretch reads LRQSDKGDIVKSKVSSSDHKDGSQ.

This sequence belongs to the MecA family. In terms of assembly, homodimer.

Enables the recognition and targeting of unfolded and aggregated proteins to the ClpC protease or to other proteins involved in proteolysis. This Leuconostoc mesenteroides subsp. mesenteroides (strain ATCC 8293 / DSM 20343 / BCRC 11652 / CCM 1803 / JCM 6124 / NCDO 523 / NBRC 100496 / NCIMB 8023 / NCTC 12954 / NRRL B-1118 / 37Y) protein is Adapter protein MecA.